Reading from the N-terminus, the 23-residue chain is Paralytic peptide 1 (23 aa).

Cysteines 7 and 19 form a disulfide.

Belongs to the GBP/PSP1/paralytic peptide family. Hemolymph.

Its function is as follows. Causes rapid, rigid paralysis when injected into Lepidopteran larvae. The physiological role may be to reduce hemolymph loss following injury and promote wound healing. The chain is Paralytic peptide 1 from Spodoptera exigua (Beet armyworm).